The primary structure comprises 32 residues: Beta-hexosaminidase (32 aa).

The GH18 domain occupies 1–32 (GKSSSRPLGDATLGDLDFDIEVTQDYWDDLAR). Glu21 serves as the catalytic Proton donor.

The protein belongs to the glycosyl hydrolase 18 family. Chitinase class II subfamily.

The catalysed reaction is Hydrolysis of terminal non-reducing N-acetyl-D-hexosamine residues in N-acetyl-beta-D-hexosaminides.. Activity is decreased by HgCl(2) and maltose. Activity is stimulated by Na(2)SeO(4), BaCl(2), MgCl(2), chondroitin 6-sulfate and phenylmethylsulfonyl fluoride. In terms of biological role, preferentially hydrolyzes pNP-GlcNAc, hydrolyzes pNP-GalNAc to a lesser extent. The protein is Beta-hexosaminidase of Palythoa caribaeorum (White encrusting zoanthid coral).